Reading from the N-terminus, the 786-residue chain is LPS-assembly protein LptD (786 aa).

The first 39 residues, 1–39 (MPPKPLFPNVFPGDGAPRKRRLALALLAVPGLVPAVSYA), serve as a signal peptide directing secretion. The disordered stretch occupies residues 767–786 (PGYTPLPPPPPPMSRFSNYE). Over residues 770 to 779 (TPLPPPPPPM) the composition is skewed to pro residues.

Belongs to the LptD family. Component of the lipopolysaccharide transport and assembly complex. Interacts with LptE and LptA.

Its subcellular location is the cell outer membrane. In terms of biological role, together with LptE, is involved in the assembly of lipopolysaccharide (LPS) at the surface of the outer membrane. In Burkholderia cenocepacia (strain HI2424), this protein is LPS-assembly protein LptD.